The chain runs to 57 residues: Lantibiotic nukacin (57 aa).

A propeptide spanning residues 1–30 (MENSKVMKDIEVANLLEEVQEDELNEVLGA) is cleaved from the precursor. Residues 39–44 (TVSHDC) constitute a cross-link (beta-methyllanthionine (Thr-Cys)). 2 consecutive cross-links (lanthionine (Ser-Cys)) follow at residues 41–55 (SHDC…VFTC) and 48–56 (SFQFVFTCC). The residue at position 54 (threonine 54) is a 2,3-didehydrobutyrine.

In terms of processing, maturation of lantibiotics involves the enzymatic conversion of Thr, and Ser into dehydrated AA and the formation of thioether bonds with cysteine. This is followed by membrane translocation and cleavage of the modified precursor.

It is found in the secreted. Its function is as follows. Lanthionine-containing peptide antibiotic (lantibiotic) active on Gram-positive bacteria. The bactericidal activity of lantibiotics is based on depolarization of energized bacterial cytoplasmic membranes, initiated by the formation of aqueous transmembrane pores. This chain is Lantibiotic nukacin, found in Staphylococcus simulans.